Here is a 331-residue protein sequence, read N- to C-terminus: Adenosine deaminase (331 aa).

Zn(2+)-binding residues include His-12 and His-14. Positions 14, 16, and 170 each coordinate substrate. Position 197 (His-197) interacts with Zn(2+). The Proton donor role is filled by Glu-200. Asp-278 is a binding site for Zn(2+). Asp-279 contacts substrate.

The protein belongs to the metallo-dependent hydrolases superfamily. Adenosine and AMP deaminases family. Adenosine deaminase subfamily. Zn(2+) is required as a cofactor.

It carries out the reaction adenosine + H2O + H(+) = inosine + NH4(+). The catalysed reaction is 2'-deoxyadenosine + H2O + H(+) = 2'-deoxyinosine + NH4(+). In terms of biological role, catalyzes the hydrolytic deamination of adenosine and 2-deoxyadenosine. The polypeptide is Adenosine deaminase (Shewanella sp. (strain MR-4)).